We begin with the raw amino-acid sequence, 464 residues long: Serine carboxypeptidase-like 22 (464 aa).

The N-terminal stretch at 1–22 (MARTHLLFLLFVLLSLATSSTS) is a signal peptide. Residues N52, N113, and N137 are each glycosylated (N-linked (GlcNAc...) asparagine). 3 cysteine pairs are disulfide-bonded: C86–C346, C247–C258, and C282–C314. S179 is an active-site residue. N-linked (GlcNAc...) asparagine glycans are attached at residues N290 and N335. Active-site residues include D385 and H437.

It belongs to the peptidase S10 family. Expression not detected.

The protein localises to the secreted. Functionally, probable carboxypeptidase. The chain is Serine carboxypeptidase-like 22 (SCPL22) from Arabidopsis thaliana (Mouse-ear cress).